The following is a 402-amino-acid chain: UDP-GlcNAc:betaGal beta-1,3-N-acetylglucosaminyltransferase 9 (402 aa).

Residues 1–10 are Cytoplasmic-facing; that stretch reads MRRRLRLRRD. The chain crosses the membrane as a helical; Signal-anchor for type II membrane protein span at residues 11–27; the sequence is ALLTLLLGASLGLLLYA. At 28–402 the chain is on the lumenal side; it reads QRDGAAPTAS…VAAGPFQWDS (375 aa). Over residues 32–47 the composition is skewed to low complexity; sequence AAPTASAPRGRGRAAP. Positions 32-83 are disordered; that stretch reads AAPTASAPRGRGRAAPRPTPGPRAFQLPDAGAAPPAYEGDTPAPPTPTGPFD.

This sequence belongs to the glycosyltransferase 31 family.

The protein resides in the golgi apparatus membrane. The chain is UDP-GlcNAc:betaGal beta-1,3-N-acetylglucosaminyltransferase 9 from Homo sapiens (Human).